Consider the following 217-residue polypeptide: Adenylate kinase (217 aa).

10–15 (GAGKGT) provides a ligand contact to ATP. Residues 30–59 (STGDIFRANIKNNTELGAKAKEYMDQGLLV) form an NMP region. AMP contacts are provided by residues T31, R36, 57–59 (LLV), 85–88 (GFPR), and Q92. The tract at residues 126-163 (GRRACVSCGGTYHVVFTPTKKEGICDACGGELTIRDDD) is LID. R127 provides a ligand contact to ATP. Positions 130 and 133 each coordinate Zn(2+). 136 to 137 (TY) contacts ATP. Zn(2+)-binding residues include C150 and C153. Residues R160 and R171 each contribute to the AMP site. Residue K199 participates in ATP binding.

Belongs to the adenylate kinase family. As to quaternary structure, monomer.

The protein localises to the cytoplasm. It carries out the reaction AMP + ATP = 2 ADP. The protein operates within purine metabolism; AMP biosynthesis via salvage pathway; AMP from ADP: step 1/1. Functionally, catalyzes the reversible transfer of the terminal phosphate group between ATP and AMP. Plays an important role in cellular energy homeostasis and in adenine nucleotide metabolism. In Lachnoclostridium phytofermentans (strain ATCC 700394 / DSM 18823 / ISDg) (Clostridium phytofermentans), this protein is Adenylate kinase.